Here is a 433-residue protein sequence, read N- to C-terminus: Enolase (433 aa).

Q163 contacts (2R)-2-phosphoglycerate. Catalysis depends on E205, which acts as the Proton donor. Mg(2+) contacts are provided by D242, E285, and D312. Residues K337, R366, S367, and K388 each coordinate (2R)-2-phosphoglycerate. Catalysis depends on K337, which acts as the Proton acceptor.

The protein belongs to the enolase family. Mg(2+) is required as a cofactor.

Its subcellular location is the cytoplasm. It localises to the secreted. The protein resides in the cell surface. It catalyses the reaction (2R)-2-phosphoglycerate = phosphoenolpyruvate + H2O. It functions in the pathway carbohydrate degradation; glycolysis; pyruvate from D-glyceraldehyde 3-phosphate: step 4/5. Its function is as follows. Catalyzes the reversible conversion of 2-phosphoglycerate (2-PG) into phosphoenolpyruvate (PEP). It is essential for the degradation of carbohydrates via glycolysis. The sequence is that of Enolase from Lawsonia intracellularis (strain PHE/MN1-00).